The chain runs to 120 residues: Ribosome-binding factor A (120 aa).

This sequence belongs to the RbfA family. As to quaternary structure, monomer. Binds 30S ribosomal subunits, but not 50S ribosomal subunits or 70S ribosomes.

The protein resides in the cytoplasm. One of several proteins that assist in the late maturation steps of the functional core of the 30S ribosomal subunit. Associates with free 30S ribosomal subunits (but not with 30S subunits that are part of 70S ribosomes or polysomes). Required for efficient processing of 16S rRNA. May interact with the 5'-terminal helix region of 16S rRNA. In Clostridium botulinum (strain 657 / Type Ba4), this protein is Ribosome-binding factor A.